The chain runs to 532 residues: Berberine bridge enzyme-like 18 (532 aa).

A signal peptide spans 1–29; that stretch reads MKFQSFFSSVLIFFTTSTLLLSIPHPVSA. Residues N30, N33, N46, N59, N147, N169, and N262 are each glycosylated (N-linked (GlcNAc...) asparagine). An intrachain disulfide couples C40 to C102. Residues 80–254 enclose the FAD-binding PCMH-type domain; that stretch reads DVPKPVLILT…LSWKIGLINV (175 aa). A cross-link (6-(S-cysteinyl)-8alpha-(pros-histidyl)-FAD (His-Cys)) is located at residues 117–179; the sequence is HDYEGLSYVT…RTLAFPAGVC (63 aa).

This sequence belongs to the oxygen-dependent FAD-linked oxidoreductase family. The cofactor is FAD. In terms of processing, the FAD cofactor is bound via a bicovalent 6-S-cysteinyl, 8alpha-N1-histidyl FAD linkage.

Its subcellular location is the secreted. It localises to the cell wall. The protein is Berberine bridge enzyme-like 18 of Arabidopsis thaliana (Mouse-ear cress).